Reading from the N-terminus, the 37-residue chain is Large ribosomal subunit protein bL36 (37 aa).

Belongs to the bacterial ribosomal protein bL36 family.

The protein is Large ribosomal subunit protein bL36 of Aliivibrio fischeri (strain ATCC 700601 / ES114) (Vibrio fischeri).